The chain runs to 567 residues: Membrane protein insertase YidC (567 aa).

The chain crosses the membrane as a helical span at residues 3–23 (IQRIVLFAGLAIVSYLMVLAW). Positions 32–80 (TEQVAEAQSSSDSSATNSTDDMILPEDNNAGGEEFATPETGSLASTSAN) are disordered. Positions 40 to 52 (SSSDSSATNSTDD) are enriched in low complexity. Polar residues predominate over residues 70-80 (ETGSLASTSAN). Helical transmembrane passes span 354–374 (FGWL…FYGL), 378–398 (WGVA…HLSA), 445–465 (GGCL…WVLF), 485–505 (MDPY…QMSL), and 522–542 (PLIF…YWLV).

This sequence belongs to the OXA1/ALB3/YidC family. Type 1 subfamily. In terms of assembly, interacts with the Sec translocase complex via SecD. Specifically interacts with transmembrane segments of nascent integral membrane proteins during membrane integration.

It is found in the cell inner membrane. Its function is as follows. Required for the insertion and/or proper folding and/or complex formation of integral membrane proteins into the membrane. Involved in integration of membrane proteins that insert both dependently and independently of the Sec translocase complex, as well as at least some lipoproteins. Aids folding of multispanning membrane proteins. This chain is Membrane protein insertase YidC, found in Marinobacter nauticus (strain ATCC 700491 / DSM 11845 / VT8) (Marinobacter aquaeolei).